A 167-amino-acid chain; its full sequence is Probable glutathione peroxidase 8 (167 aa).

Residue cysteine 41 is part of the active site.

Belongs to the glutathione peroxidase family.

The enzyme catalyses 2 glutathione + H2O2 = glutathione disulfide + 2 H2O. In terms of biological role, may constitute a glutathione peroxidase-like protective system against oxidative stresses. The sequence is that of Probable glutathione peroxidase 8 (GPX8) from Arabidopsis thaliana (Mouse-ear cress).